Reading from the N-terminus, the 235-residue chain is Glycerol-3-phosphate acyltransferase (235 aa).

The next 6 helical transmembrane spans lie at 2-22 (FTLI…TSII), 56-76 (TVTI…VVFF), 94-114 (LIAG…GFKG), 126-146 (FGIA…VVFL), 152-172 (VASI…KYLF), and 190-210 (FIHD…AAAI).

The protein belongs to the PlsY family. In terms of assembly, probably interacts with PlsX.

The protein resides in the cell inner membrane. The catalysed reaction is an acyl phosphate + sn-glycerol 3-phosphate = a 1-acyl-sn-glycero-3-phosphate + phosphate. It functions in the pathway lipid metabolism; phospholipid metabolism. Its function is as follows. Catalyzes the transfer of an acyl group from acyl-phosphate (acyl-PO(4)) to glycerol-3-phosphate (G3P) to form lysophosphatidic acid (LPA). This enzyme utilizes acyl-phosphate as fatty acyl donor, but not acyl-CoA or acyl-ACP. The sequence is that of Glycerol-3-phosphate acyltransferase from Chlorobium phaeobacteroides (strain BS1).